Reading from the N-terminus, the 153-residue chain is Protein E6 (153 aa).

Zinc fingers lie at residues 37–73 (CHFCSSFMDLNNKASYLASQLKVIVKDCCFKGACIKC) and 110–146 (CSECLALLTASEKLDAKCELQTFILVRHMWRTSCRAC).

It belongs to the papillomaviridae E6 protein family. Forms homodimers. Interacts with ubiquitin-protein ligase UBE3A/E6-AP; this interaction stimulates UBE3A ubiquitin activity. Interacts with host BAK1.

Its subcellular location is the host cytoplasm. It is found in the host nucleus. Plays a major role in the induction and maintenance of cellular transformation. E6 associates with host UBE3A/E6-AP ubiquitin-protein ligase and modulates its activity. Protects host keratinocytes from apoptosis by mediating the degradation of host BAK1. May also inhibit host immune response. The chain is Protein E6 from Micromys minutus papillomavirus (MmPV).